The sequence spans 988 residues: UvrABC system protein A (988 aa).

An ATP-binding site is contributed by 33-40 (GLSGSGKS). A C4-type zinc finger spans residues 255–282 (CPVCDYSLPELEPRLFSFNAPVGACPSC). ABC transporter domains follow at residues 312–589 (WDRR…PRSL) and 609–938 (PNPK…QFLA). Position 642-649 (642-649 (GVSGSGKS)) interacts with ATP. The segment at 741–767 (CEACQGDGMIKVEMHFLPDVYVPCDVC) adopts a C4-type zinc-finger fold. The segment at 948–988 (ETRPAAMANKPDARPPRKVKPEKVAKATKTATKKTAKKKAS) is disordered. Residues 958–972 (PDARPPRKVKPEKVA) are compositionally biased toward basic and acidic residues. Basic residues predominate over residues 978-988 (ATKKTAKKKAS).

This sequence belongs to the ABC transporter superfamily. UvrA family. Forms a heterotetramer with UvrB during the search for lesions.

Its subcellular location is the cytoplasm. Its function is as follows. The UvrABC repair system catalyzes the recognition and processing of DNA lesions. UvrA is an ATPase and a DNA-binding protein. A damage recognition complex composed of 2 UvrA and 2 UvrB subunits scans DNA for abnormalities. When the presence of a lesion has been verified by UvrB, the UvrA molecules dissociate. This is UvrABC system protein A from Xanthomonas campestris pv. campestris (strain ATCC 33913 / DSM 3586 / NCPPB 528 / LMG 568 / P 25).